Reading from the N-terminus, the 105-residue chain is Multidrug resistance protein EbrA (105 aa).

4 helical membrane-spanning segments follow: residues 2–22 (LIGY…AAML), 35–55 (ALVV…LNHI), 57–77 (LSLS…VIGV), and 84–104 (LNAK…LLNW).

This sequence belongs to the drug/metabolite transporter (DMT) superfamily. Small multidrug resistance (SMR) (TC 2.A.7.1) family. EbrA/EbrB subfamily. In terms of assembly, the efflux pump is composed of EbrA and EbrB.

It localises to the cell membrane. In terms of biological role, part of a multidrug efflux pump. Confers resistance to cationic lipophilic dyes such as ethidium bromide, acriflavine, pyronine Y and safranin O. The efflux is probably coupled to an influx of protons. The polypeptide is Multidrug resistance protein EbrA (ebrA) (Bacillus subtilis (strain 168)).